The primary structure comprises 472 residues: Glutamate--tRNA ligase (472 aa).

Residues 9-19 (PSPTGYLHVGG) carry the 'HIGH' region motif. The Zn(2+) site is built by Cys98, Cys100, Cys125, and His127. Positions 237-241 (KLSKR) match the 'KMSKS' region motif. An ATP-binding site is contributed by Lys240.

This sequence belongs to the class-I aminoacyl-tRNA synthetase family. Glutamate--tRNA ligase type 1 subfamily. As to quaternary structure, monomer. Zn(2+) is required as a cofactor.

The protein localises to the cytoplasm. It catalyses the reaction tRNA(Glu) + L-glutamate + ATP = L-glutamyl-tRNA(Glu) + AMP + diphosphate. Functionally, catalyzes the attachment of glutamate to tRNA(Glu) in a two-step reaction: glutamate is first activated by ATP to form Glu-AMP and then transferred to the acceptor end of tRNA(Glu). The chain is Glutamate--tRNA ligase from Klebsiella pneumoniae subsp. pneumoniae (strain ATCC 700721 / MGH 78578).